The primary structure comprises 158 residues: Deoxyuridine 5'-triphosphate nucleotidohydrolase (158 aa).

Substrate is bound by residues 66-68 (RSG), asparagine 79, 83-85 (TID), and lysine 93. Residues 139 to 158 (RGFGSSGVARKGHYQGKPLA) are disordered.

This sequence belongs to the dUTPase family. It depends on Mg(2+) as a cofactor.

The catalysed reaction is dUTP + H2O = dUMP + diphosphate + H(+). The protein operates within pyrimidine metabolism; dUMP biosynthesis; dUMP from dCTP (dUTP route): step 2/2. Its function is as follows. This enzyme is involved in nucleotide metabolism: it produces dUMP, the immediate precursor of thymidine nucleotides and it decreases the intracellular concentration of dUTP so that uracil cannot be incorporated into DNA. The sequence is that of Deoxyuridine 5'-triphosphate nucleotidohydrolase from Helicobacter hepaticus (strain ATCC 51449 / 3B1).